The chain runs to 478 residues: Cysteine--tRNA ligase (478 aa).

Cysteine 29 contacts Zn(2+). A 'HIGH' region motif is present at residues 31-41 (ATVQSIPHIGH). Zn(2+)-binding residues include cysteine 207, histidine 232, and glutamate 236. A 'KMSKS' region motif is present at residues 263-267 (KMSKS). Lysine 266 is a binding site for ATP.

Belongs to the class-I aminoacyl-tRNA synthetase family. As to quaternary structure, monomer. Zn(2+) is required as a cofactor.

Its subcellular location is the cytoplasm. The catalysed reaction is tRNA(Cys) + L-cysteine + ATP = L-cysteinyl-tRNA(Cys) + AMP + diphosphate. The sequence is that of Cysteine--tRNA ligase from Corynebacterium jeikeium (strain K411).